The sequence spans 527 residues: Hopanoid C-2 methylase (527 aa).

The region spanning 36–148 (VAAFMPPQGL…AKLTHDVTRP (113 aa)) is the B12-binding domain. Residues 173-408 (AECSKYLLGS…HDQVVAMWKD (236 aa)) enclose the Radical SAM core domain. Positions 189, 193, and 196 each coordinate [4Fe-4S] cluster.

Belongs to the radical SAM superfamily. [4Fe-4S] cluster is required as a cofactor.

In terms of biological role, required for methylation of hopanoids at the C-2 position. This Rhodopseudomonas palustris (strain TIE-1) protein is Hopanoid C-2 methylase.